The primary structure comprises 292 residues: Small ribosomal subunit biogenesis GTPase RsgA (292 aa).

The region spanning 62–213 (KNSLVRPPIV…IADTPGFSSL (152 aa)) is the CP-type G domain. GTP-binding positions include 111-114 (SKMD) and 156-164 (GQTGVGKST). Residues C237, C242, H244, and C250 each coordinate Zn(2+).

It belongs to the TRAFAC class YlqF/YawG GTPase family. RsgA subfamily. In terms of assembly, monomer. Associates with 30S ribosomal subunit, binds 16S rRNA. The cofactor is Zn(2+).

It is found in the cytoplasm. Its function is as follows. One of several proteins that assist in the late maturation steps of the functional core of the 30S ribosomal subunit. Helps release RbfA from mature subunits. May play a role in the assembly of ribosomal proteins into the subunit. Circularly permuted GTPase that catalyzes slow GTP hydrolysis, GTPase activity is stimulated by the 30S ribosomal subunit. The sequence is that of Small ribosomal subunit biogenesis GTPase RsgA from Streptococcus pneumoniae serotype 4 (strain ATCC BAA-334 / TIGR4).